A 476-amino-acid chain; its full sequence is NAC domain-containing protein 86 (476 aa).

Residues 6–157 (LPPGFRFHPT…AYALCRVFKK (152 aa)) enclose the NAC domain. Residues 105-163 (IGTKKTLVYYRGRAPHGIRTGWVMHEYRLDESECEPSAFGMQDAYALCRVFKKIVIEAK) mediate DNA binding.

In terms of tissue distribution, expressed in a few sieve element cells before enucleation and in phloem-pole pericycle cells.

It is found in the nucleus. Functionally, transcription factor directing sieve element enucleation and cytosol degradation. Not required for formation of lytic vacuoles. Regulates, with NAC045, the transcription of NEN1, NEN2, NEN3, NEN4, RTM1, RTM2, UBP16, PLDZETA, ABCB10 and At1g26450. This chain is NAC domain-containing protein 86, found in Arabidopsis thaliana (Mouse-ear cress).